The sequence spans 179 residues: ATP synthase subunit delta (179 aa).

Belongs to the ATPase delta chain family. In terms of assembly, F-type ATPases have 2 components, F(1) - the catalytic core - and F(0) - the membrane proton channel. F(1) has five subunits: alpha(3), beta(3), gamma(1), delta(1), epsilon(1). F(0) has three main subunits: a(1), b(2) and c(10-14). The alpha and beta chains form an alternating ring which encloses part of the gamma chain. F(1) is attached to F(0) by a central stalk formed by the gamma and epsilon chains, while a peripheral stalk is formed by the delta and b chains.

It is found in the cell membrane. Its function is as follows. F(1)F(0) ATP synthase produces ATP from ADP in the presence of a proton or sodium gradient. F-type ATPases consist of two structural domains, F(1) containing the extramembraneous catalytic core and F(0) containing the membrane proton channel, linked together by a central stalk and a peripheral stalk. During catalysis, ATP synthesis in the catalytic domain of F(1) is coupled via a rotary mechanism of the central stalk subunits to proton translocation. In terms of biological role, this protein is part of the stalk that links CF(0) to CF(1). It either transmits conformational changes from CF(0) to CF(1) or is implicated in proton conduction. This chain is ATP synthase subunit delta, found in Staphylococcus carnosus (strain TM300).